The primary structure comprises 381 residues: E3 ubiquitin-protein ligase RNF133 (381 aa).

In terms of domain architecture, PA spans 65 to 167; sequence SSILKRVAGV…VKGMEILHLI (103 aa). The chain crosses the membrane as a helical span at residues 186 to 208; sequence WLNHYFVSFMIVTTATLAYFTFY. The RING-type; atypical zinc-finger motif lies at 256–297; sequence CVICFEAYKPNEIVRILTCKHFFHKNCIDPWILAHGTCPMCK. The disordered stretch occupies residues 340–381; it reads LPPARTSSKVTHVQEHPTSVNVGSQPPEAEETGHPSFGQHDL. Residues 344–363 show a composition bias toward polar residues; that stretch reads RTSSKVTHVQEHPTSVNVGS.

Interacts with E3 ligase UBE2J1. Post-translationally, auto-ubiquitinated.

Its subcellular location is the endoplasmic reticulum membrane. It catalyses the reaction S-ubiquitinyl-[E2 ubiquitin-conjugating enzyme]-L-cysteine + [acceptor protein]-L-lysine = [E2 ubiquitin-conjugating enzyme]-L-cysteine + N(6)-ubiquitinyl-[acceptor protein]-L-lysine.. It functions in the pathway protein modification; protein ubiquitination. In terms of biological role, has E3 ubiquitin-protein ligase activity. Plays a role in male fecundity through the interaction with the E2 ubituitin-protein ligase UBE2J1. In Rattus norvegicus (Rat), this protein is E3 ubiquitin-protein ligase RNF133 (Rnf133).